Here is a 248-residue protein sequence, read N- to C-terminus: UDP-2,3-diacylglucosamine hydrolase (248 aa).

5 residues coordinate Mn(2+): Asp-7, His-9, Asp-40, Asn-78, and His-113. 78–79 (NR) lines the substrate pocket. Residues Asp-121, Ser-159, Thr-163, Lys-166, and His-194 each coordinate substrate. 2 residues coordinate Mn(2+): His-194 and His-196.

Belongs to the LpxH family. The cofactor is Mn(2+).

The protein resides in the cell inner membrane. It carries out the reaction UDP-2-N,3-O-bis[(3R)-3-hydroxytetradecanoyl]-alpha-D-glucosamine + H2O = 2-N,3-O-bis[(3R)-3-hydroxytetradecanoyl]-alpha-D-glucosaminyl 1-phosphate + UMP + 2 H(+). The protein operates within glycolipid biosynthesis; lipid IV(A) biosynthesis; lipid IV(A) from (3R)-3-hydroxytetradecanoyl-[acyl-carrier-protein] and UDP-N-acetyl-alpha-D-glucosamine: step 4/6. In terms of biological role, hydrolyzes the pyrophosphate bond of UDP-2,3-diacylglucosamine to yield 2,3-diacylglucosamine 1-phosphate (lipid X) and UMP by catalyzing the attack of water at the alpha-P atom. Involved in the biosynthesis of lipid A, a phosphorylated glycolipid that anchors the lipopolysaccharide to the outer membrane of the cell. This chain is UDP-2,3-diacylglucosamine hydrolase, found in Pseudomonas fluorescens (strain Pf0-1).